Reading from the N-terminus, the 254-residue chain is MKIGVYGASGRIGKLLLEELKGGYKGLALSSVFVRQKCETDFSSFSHAPLVTNDLKAFVRACECVIDFSLPKGVDNLLEALLECPKILVSGTTGLEKETLEKMQQLALKAPLLHAHNMSIGIMMLNQLAFLTSLKLKDADIEIIETHHNLKKDIPSGTALSLYETCAKARGYDEKNALITHREGLRSKESIGIAALRGGDVAGKHTIGFYLEGEYIELSHTATNRSIFAKGALEVALWLKDKAAKKYEINEMFG.

7 to 12 contributes to the NAD(+) binding site; the sequence is GASGRI. Arg35 is an NADP(+) binding site. Residues 91–93 and 115–118 each bind NAD(+); these read GTT and AHNM. The Proton donor/acceptor role is filled by His147. His148 contributes to the (S)-2,3,4,5-tetrahydrodipicolinate binding site. The Proton donor role is filled by Lys151. 157-158 serves as a coordination point for (S)-2,3,4,5-tetrahydrodipicolinate; sequence GT.

Belongs to the DapB family.

It localises to the cytoplasm. It catalyses the reaction (S)-2,3,4,5-tetrahydrodipicolinate + NAD(+) + H2O = (2S,4S)-4-hydroxy-2,3,4,5-tetrahydrodipicolinate + NADH + H(+). The enzyme catalyses (S)-2,3,4,5-tetrahydrodipicolinate + NADP(+) + H2O = (2S,4S)-4-hydroxy-2,3,4,5-tetrahydrodipicolinate + NADPH + H(+). Its pathway is amino-acid biosynthesis; L-lysine biosynthesis via DAP pathway; (S)-tetrahydrodipicolinate from L-aspartate: step 4/4. Its function is as follows. Catalyzes the conversion of 4-hydroxy-tetrahydrodipicolinate (HTPA) to tetrahydrodipicolinate. In Helicobacter pylori (strain ATCC 700392 / 26695) (Campylobacter pylori), this protein is 4-hydroxy-tetrahydrodipicolinate reductase.